The primary structure comprises 373 residues: MTDNSKICVVVGMSGGVDSSVTALLLKEQGYDVIGVFMKNWHDTDEFGVCTATEDYKDVAAVADQIGIPYYSVNFEKEYWDRVFEYFLAEYRAGRTPNPDVMCNKEIKFKAFLDYAMTLGADYVATGHYAQVKRDENGTVHMLRGADNGKDQTYFLSQLSQEQLQKTLFPLGHLQKSEVREIAERAGLATAKKKDSTGICFIGEKNFKQFLSQYLPAQKGRMMTIDGRDMGEHAGLMYYTIGQRGGLGIGGQHGGDNQPWFVVGKDLSQNILYVGQGFYHEALMSNSLDASVIHFTREMPEEFTFECTAKFRYRQPDSHVRVHVRGDKAEVVFAEPQRAITPGQAVVFYDGKECLGGGMIDMAYKNGQPCQYI.

Residues 12–19 (GMSGGVDS) and methionine 38 contribute to the ATP site. The interaction with target base in tRNA stretch occupies residues 98–100 (NPD). Cysteine 103 acts as the Nucleophile in catalysis. A disulfide bond links cysteine 103 and cysteine 200. Glycine 127 contacts ATP. Residues 150 to 152 (KDQ) form an interaction with tRNA region. Catalysis depends on cysteine 200, which acts as the Cysteine persulfide intermediate. Residues 312 to 313 (RY) form an interaction with tRNA region.

The protein belongs to the MnmA/TRMU family.

The protein resides in the cytoplasm. The catalysed reaction is S-sulfanyl-L-cysteinyl-[protein] + uridine(34) in tRNA + AH2 + ATP = 2-thiouridine(34) in tRNA + L-cysteinyl-[protein] + A + AMP + diphosphate + H(+). Its function is as follows. Catalyzes the 2-thiolation of uridine at the wobble position (U34) of tRNA, leading to the formation of s(2)U34. This chain is tRNA-specific 2-thiouridylase MnmA, found in Streptococcus pyogenes serotype M3 (strain SSI-1).